Here is a 69-residue protein sequence, read N- to C-terminus: U5-agatoxin-Ao1a (69 aa).

A signal peptide spans 1 to 20 (MRTIISLLLLSAMVFAVIEA). Residues 21–34 (ISLEEGLQLFEGER) constitute a propeptide that is removed on maturation. 2 disulfide bridges follow: Cys36-Cys52 and Cys43-Cys57.

It belongs to the neurotoxin 01 (U2-agtx) family. In terms of processing, does not contain a cysteine at position 61 which disrupts the cysteine framework. Expressed by the venom gland.

It is found in the secreted. The sequence is that of U5-agatoxin-Ao1a from Agelena orientalis (Funnel-web spider).